Consider the following 66-residue polypeptide: Xenoxin-2 (66 aa).

Disulfide bonds link Cys3–Cys24, Cys17–Cys37, Cys43–Cys58, and Cys59–Cys64.

In terms of tissue distribution, expressed by the skin dorsal glands.

The protein localises to the secreted. Its function is as follows. Lacks alpha-neurotoxic activity, has apparently no antibacterial activity, nor anti-coagulant potency. This chain is Xenoxin-2, found in Xenopus laevis (African clawed frog).